Consider the following 1151-residue polypeptide: MLRRVTVAAVCATRRKLCEAGRELAALWGIETRGRCEDSAAARPFPILAMPGRNKAKSTCSCPDLQPNGQDLGENSRVARLGADESEEEGRRGSLSNAGDPEIVKSPSDPKQYRYIKLQNGLQALLISDLSNMEGKTGNTTDDEEEEEVEEEEEDDDEDSGAEIEDDDEEGFDDEDEFDDEHDDDLDTEDNELEELEERAEARKKTTEKQSAAALCVGVGSFADPDDLPGLAHFLEHMVFMGSLKYPDENGFDAFLKKHGGSDNASTDCERTVFQFDVQRKYFKEALDRWAQFFIHPLMIRDAIDREVEAVDSEYQLARPSDANRKEMLFGSLARPGHPMGKFFWGNAETLKHEPRKNNIDTHARLREFWMRYYSSHYMTLVVQSKETLDTLEKWVTEIFSQIPNNGLPRPNFGHLTDPFDTPAFNKLYRVVPIRKIHALTITWALPPQQQHYRVKPLHYISWLVGHEGKGSILSFLRKKCWALALFGGNGETGFEQNSTYSVFSISITLTDEGYEHFYEVAYTVFQYLKMLQKLGPEKRIFEEIRKIEDNEFHYQEQTDPVEYVENMCENMQLYPLQDILTGDQLLFEYKPEVIGEALNQLVPQKANLVLLSGANEGKCDLKEKWFGTQYSIEDIENSWAELWNSNFELNPDLHLPAENKYIATDFTLKAFDCPETEYPVKIVNTPQGCLWYKKDNKFKIPKAYIRFHLISPLIQKSAANVVLFDIFVNILTHNLAEPAYEADVAQLEYKLVAGEHGLIIRVKGFNHKLPLLFQLIIDYLAEFNSTPAVFTMITEQLKKTYFNILIKPETLAKDVRLLILEYARWSMIDKYQALMDGLSLESLLSFVKEFKSQLFVEGLVQGNVTSTESMDFLKYVVDKLNFKPLEQEMPVQFQVVELPSGHHLCKVKALNKGDANSEVTVYYQSGTRSLREYTLMELLVMHMEEPCFDFLRTKQTLGYHVYPTCRNTSGILGFSVTVGTQATKYNSEVVDKKIEEFLSSFEEKIENLTEEAFNTQVTALIKLKECEDTHLGEEVDRNWNEVVTQQYLFDRLAHEIEALKSFSKSDLVNWFKAHRGPGSKMLSVHVVGYGKYELEEDGTPSSEDSNSSCEVMQLTYLPTSPLLADCIIPITDIRAFTTTLNLLPYHKIVK.

A signal peptide spans 1–20 (MLRRVTVAAVCATRRKLCEA). Disordered stretches follow at residues 53–108 (RNKA…KSPS) and 133–207 (MEGK…KKTT). 3 positions are modified to phosphoserine: Ser-86, Ser-94, and Ser-96. Residues 141-198 (TDDEEEEEVEEEEEDDDEDSGAEIEDDDEEGFDDEDEFDDEHDDDLDTEDNELEELEE) show a composition bias toward acidic residues. A Zn(2+)-binding site is contributed by His-233. The active-site Proton acceptor is the Glu-236. 2 residues coordinate Zn(2+): His-237 and Glu-314.

Belongs to the peptidase M16 family. In terms of assembly, interacts with BACE1 and NRG1. Zn(2+) serves as cofactor. Primarily in adult heart, skeletal muscle, and testis and at much lower levels in other tissues.

The protein localises to the mitochondrion. The protein resides in the cell projection. It localises to the dendrite. It catalyses the reaction Hydrolysis of polypeptides, preferably at -Xaa-|-Arg-Lys-, and less commonly at -Arg-|-Arg-Xaa-, in which Xaa is not Arg or Lys.. In terms of biological role, cleaves peptide substrates on the N-terminus of arginine residues in dibasic pairs. Is a critical activator of BACE1- and ADAM17-mediated pro-neuregulin ectodomain shedding, involved in the positive regulation of axonal maturation and myelination. Required for proper functioning of 2-oxoglutarate dehydrogenase (OGDH). This is Nardilysin from Homo sapiens (Human).